The primary structure comprises 666 residues: Probable potassium transport system protein Kup (666 aa).

12 helical membrane passes run 16 to 36 (GFII…LYTI), 58 to 78 (ISLI…LIAL), 100 to 120 (PWLI…GALT), 141 to 161 (IYQN…VLFG), 165 to 185 (FGTG…FSFL), 221 to 241 (IFIL…YSDL), 253 to 273 (WPFV…WILA), 294 to 314 (VYLV…LISG), 343 to 363 (LYIP…VLAF), 373 to 393 (YGLA…YYLI), 399 to 419 (PILA…FFLA), and 424 to 444 (FMHG…VMFI).

This sequence belongs to the HAK/KUP transporter (TC 2.A.72) family.

The protein localises to the cell membrane. The catalysed reaction is K(+)(in) + H(+)(in) = K(+)(out) + H(+)(out). Transport of potassium into the cell. Likely operates as a K(+):H(+) symporter. This Streptococcus pyogenes serotype M1 protein is Probable potassium transport system protein Kup.